The primary structure comprises 248 residues: MALLEICCYSMECALTAQQNGADRVELCAAPKEGGLTPSLGVLKSVRQWVTIPVHPIIRPRGGDFCYSDGEFAAILEDVLTVRELGFPGLVTGVLDVDGNVDMPRMEKIMAAAGPLAVTFHRAFDMCANPLNTLSNLAELGIARVLTSGQKSDALQGLSKIMELIAHRDAPIIMAGAGVRAENLHHFLDAGVLEVHSSAGAWQASPMRYRNQGLSMSSDAHADEYSRYVVDGAAVAEMKGIIERHQAK.

It belongs to the CutC family. Homodimer.

Its subcellular location is the cytoplasm. The sequence is that of PF03932 family protein CutC from Shigella boydii serotype 18 (strain CDC 3083-94 / BS512).